The following is a 286-amino-acid chain: Peroxisomal membrane protein pex14 (286 aa).

Positions T61–W69 match the SH3-binding motif. Residues K122–Q214 are a coiled coil. Residues K218–D239 form a disordered region.

It belongs to the peroxin-14 family. Interacts with PEX13 (via SH3 domain); forming the PEX13-PEX14 docking complex. Interacts with PEX5 (via WxxxF/Y motifs).

It localises to the peroxisome membrane. Its function is as follows. Component of the PEX13-PEX14 docking complex, a translocon channel that specifically mediates the import of peroxisomal cargo proteins bound to PEX5 receptor. The PEX13-PEX14 docking complex forms a large import pore which can be opened to a diameter of about 9 nm. Mechanistically, PEX5 receptor along with cargo proteins associates with the PEX14 subunit of the PEX13-PEX14 docking complex in the cytosol, leading to the insertion of the receptor into the organelle membrane with the concomitant translocation of the cargo into the peroxisome matrix. The sequence is that of Peroxisomal membrane protein pex14 (pex14) from Schizosaccharomyces pombe (strain 972 / ATCC 24843) (Fission yeast).